Here is a 116-residue protein sequence, read N- to C-terminus: Non-specific lipid-transfer protein 8 (116 aa).

Residues 1–24 form the signal peptide; sequence MNVLKCLAIISVLGIFFIPRYSES. Intrachain disulfides connect C28/C76, C38/C53, C54/C98, and C74/C112.

Belongs to the plant LTP family.

Functionally, plant non-specific lipid-transfer proteins transfer phospholipids as well as galactolipids across membranes. May play a role in wax or cutin deposition in the cell walls of expanding epidermal cells and certain secretory tissues. This is Non-specific lipid-transfer protein 8 (LTP8) from Arabidopsis thaliana (Mouse-ear cress).